The sequence spans 72 residues: Translation initiation factor IF-1 (72 aa).

Positions 1-72 (MSKEDVIEMQ…TRGRITWRAK (72 aa)) constitute an S1-like domain.

It belongs to the IF-1 family. Component of the 30S ribosomal translation pre-initiation complex which assembles on the 30S ribosome in the order IF-2 and IF-3, IF-1 and N-formylmethionyl-tRNA(fMet); mRNA recruitment can occur at any time during PIC assembly.

It localises to the cytoplasm. Functionally, one of the essential components for the initiation of protein synthesis. Stabilizes the binding of IF-2 and IF-3 on the 30S subunit to which N-formylmethionyl-tRNA(fMet) subsequently binds. Helps modulate mRNA selection, yielding the 30S pre-initiation complex (PIC). Upon addition of the 50S ribosomal subunit IF-1, IF-2 and IF-3 are released leaving the mature 70S translation initiation complex. This is Translation initiation factor IF-1 from Clostridium acetobutylicum (strain ATCC 824 / DSM 792 / JCM 1419 / IAM 19013 / LMG 5710 / NBRC 13948 / NRRL B-527 / VKM B-1787 / 2291 / W).